Here is a 227-residue protein sequence, read N- to C-terminus: UPF0173 metal-dependent hydrolase BALH_4194 (227 aa).

It belongs to the UPF0173 family.

The polypeptide is UPF0173 metal-dependent hydrolase BALH_4194 (Bacillus thuringiensis (strain Al Hakam)).